Here is a 556-residue protein sequence, read N- to C-terminus: Methyltransferase/ribosomally synthesized type II borosin cyclic peptide precursor pgiMA1 (556 aa).

Residues 1 to 250 (MSSASSDSNT…SCSTLYVPPL (250 aa)) form a methyltransferase domain region. Catalysis depends on residues R74, Y78, and Y100. Y100, H102, V105, Q174, G212, S243, and T244 together coordinate S-adenosyl-L-methionine. Residues 251 to 377 (THANKFSGNM…GAVFGVMKLR (127 aa)) are clasp domain. Residues 378–386 (ASEVANEQG) form a precursor leader region. An N-methylaspartate mark is found at D421, D434, D447, D460, D473, D486, D499, D512, D525, and D538. Positions 543–556 (AVPVPDHVAGIPCM) are excised as a propeptide.

In the N-terminal section; belongs to the precorrin methyltransferase family. Homodimer. PgiMA1 automethylates at Asp-421, Asp-434, Asp-447, Asp-460, Asp-473, Asp-486, Asp-499, Asp-512, Asp-525 and Asp-538 before being processed, probably by the M64 family peptidase found in the genes surrounding PgiMA1, to release methylated peptides which then undergos macrocyclization with the N-terminus of the modified core peptides. Peptide backbone alpha-N-methylations change the physicochemical properties of amide bonds to provide structural constraints and other favorable characteristics including biological membrane permeability to peptides.

The protein operates within secondary metabolite biosynthesis. Functionally, fusion protein of the methyltransferase pgiM1 and 12 type II borosin core peptides; part of the gene cluster that mediates the biosynthesis of a type II borosin, a highly methylated cyclic peptide with potent biological activities. Type II borosins derive from the C-terminus of the fusion protein, and it is the same protein that methylates its own C-terminus using S-adenosyl methionine (SAM). The C-terminus is subsequently cleaved off and macrocyclized by a prolyloligopeptidase to give the final product. The polypeptide is Methyltransferase/ribosomally synthesized type II borosin cyclic peptide precursor pgiMA1 (Phlebiopsis gigantea (strain 11061_1 CR5-6) (White-rot fungus)).